The sequence spans 396 residues: Ornithine aminotransferase 2 (396 aa).

Lys-255 is modified (N6-(pyridoxal phosphate)lysine).

Belongs to the class-III pyridoxal-phosphate-dependent aminotransferase family. OAT subfamily. Pyridoxal 5'-phosphate is required as a cofactor.

The protein localises to the cytoplasm. The catalysed reaction is a 2-oxocarboxylate + L-ornithine = L-glutamate 5-semialdehyde + an L-alpha-amino acid. Its pathway is amino-acid biosynthesis; L-proline biosynthesis; L-glutamate 5-semialdehyde from L-ornithine: step 1/1. Catalyzes the interconversion of ornithine to glutamate semialdehyde. The chain is Ornithine aminotransferase 2 from Staphylococcus aureus (strain COL).